A 260-amino-acid chain; its full sequence is CD40 ligand (260 aa).

Topologically, residues 1–22 (MIETYSQTAPRSVATGPPVSMK) are cytoplasmic. A helical; Signal-anchor for type II membrane protein membrane pass occupies residues 23–46 (IFMYLLTVFLITQMIGSALFAVYL). Over 47–260 (HRRLDKIEDE…GFTSFGLLKL (214 aa)) the chain is Extracellular. The region spanning 121-260 (IAAHVISEAS…GFTSFGLLKL (140 aa)) is the THD domain. An intrachain disulfide couples cysteine 177 to cysteine 217. Asparagine 239 is a glycosylation site (N-linked (GlcNAc...) asparagine).

Belongs to the tumor necrosis factor family. As to quaternary structure, homotrimer. Interacts with CD28. CD40 ligand, soluble form: Exists as either a monomer or a homotrimer. Forms a ternary complex between CD40 and integrins for CD40-CD40LG signaling. In terms of processing, the soluble form derives from the membrane form by proteolytic processing.

It is found in the cell membrane. It localises to the cell surface. The protein localises to the secreted. Its function is as follows. Cytokine that acts as a ligand to CD40/TNFRSF5. Costimulates T-cell proliferation and cytokine production. Its cross-linking on T-cells generates a costimulatory signal which enhances the production of IL4 and IL10 in conjunction with the TCR/CD3 ligation and CD28 costimulation. Induces the activation of NF-kappa-B. Induces the activation of kinases MAPK8 and PAK2 in T-cells. Mediates B-cell proliferation in the absence of co-stimulus as well as IgE production in the presence of IL4. Involved in immunoglobulin class switching. Functionally, acts as a ligand for integrins, specifically ITGA5:ITGB1 and ITGAV:ITGB3; both integrins and the CD40 receptor are required for activation of CD40-CD40LG signaling, which have cell-type dependent effects, such as B-cell activation, NF-kappa-B signaling and anti-apoptotic signaling. This chain is CD40 ligand (CD40LG), found in Canis lupus familiaris (Dog).